Consider the following 167-residue polypeptide: UPF0225 protein VP1145 (167 aa).

This sequence belongs to the UPF0225 family.

This is UPF0225 protein VP1145 from Vibrio parahaemolyticus serotype O3:K6 (strain RIMD 2210633).